The chain runs to 626 residues: MSDAQDSRVGSMFGPYHLKRLLGRGGMGEVYEAEHTVKEWTVAVKLMTAEFSKDPVFRERMKREARIAGRLQEPHVVPIHDYGEVDGQMFLEMRLVEGTDLDSVLKRFGPLTPPRAVAIITQIASALDAAHADGVMHRDVKPQNILITRDDFAYLVDFGIASATTDEKLTQLGTAVGTWKYMAPERFSNDEVTYRADIYALACVLHECLTGAPPYRADSAGTLVSSHLMGPIPQPSAIRPGIPKAFDAVVARGMAKKPEDRYASAGDLALAAHEALSDPDQDHAADILRRSQESTLPAPPKPVPPPTMPATAMAPRQPPAPPVTPPGVQPAPKPSYTPPAQPGPAGQRPGPTGQPSWAPNSGPMPASGPTPTPQYYQGGGWGAPPSGGPSPWAQTPRKTNPWPLVAGAAAVVLVLVLGAIGIWIAIRPKPVQPPQPVAEERLSALLLNSSEVNAVMGSSSMQPGKPITSMDSSPVTVSLPDCQGALYTSQDPVYAGTGYTAINGLISSEPGDNYEHWVNQAVVAFPTADKARAFVQTSADKWKNCAGKTVTVTNKAKTYRWTFADVKGSPPTITVIDTQEGAEGWECQRAMSVANNVVVDVNACGYRITNQAGQIAAKIVDKVNKE.

Over 1-403 (MSDAQDSRVG…QTPRKTNPWP (403 aa)) the chain is Cytoplasmic. Residues 16–276 (YHLKRLLGRG…DLALAAHEAL (261 aa)) form the Protein kinase domain. Residues 22–30 (LGRGGMGEV) and lysine 45 contribute to the ATP site. Catalysis depends on aspartate 139, which acts as the Proton acceptor. Phosphothreonine is present on threonine 170. The interval 292 to 396 (QESTLPAPPK…GGPSPWAQTP (105 aa)) is disordered. Composition is skewed to pro residues over residues 297–308 (PAPPKPVPPPTM) and 316–342 (RQPPAPPVTPPGVQPAPKPSYTPPAQP). Residues 343–355 (GPAGQRPGPTGQP) show a composition bias toward low complexity. Residues 404 to 424 (LVAGAAAVVLVLVLGAIGIWI) form a helical membrane-spanning segment. Residues 425 to 626 (AIRPKPVQPP…AKIVDKVNKE (202 aa)) are Extracellular-facing. Disulfide bonds link cysteine 482-cysteine 545 and cysteine 587-cysteine 604.

This sequence belongs to the protein kinase superfamily. Ser/Thr protein kinase family. The cofactor is a divalent metal cation. In terms of processing, autophosphorylated on threonine and serine residues. Dephosphorylated by PstP.

The protein localises to the cell membrane. It catalyses the reaction L-seryl-[protein] + ATP = O-phospho-L-seryl-[protein] + ADP + H(+). The catalysed reaction is L-threonyl-[protein] + ATP = O-phospho-L-threonyl-[protein] + ADP + H(+). With respect to regulation, inhibited by the kinase inhibitors staurosporine and H-7. In terms of biological role, may regulate bacterial growth in response to external signals to facilitate adaptation to the host environment. In vitro, phosphorylates several substrates such as EmbR, DevR (DosR), DacB1 and Rv0681. The chain is Serine/threonine-protein kinase PknH (pknH) from Mycobacterium tuberculosis (strain ATCC 25618 / H37Rv).